Here is a 593-residue protein sequence, read N- to C-terminus: MSWLFGLNKGQQEPPGVPGFPEPPSPPGGSGDGGDKNKPKDKWSNFDPTGLERAAKAARELDQSRHAKEAINLAKVQEETLQMEQQAKIKEYEAAVEQLKNEQIRVQAEERRKTLNEETKQHQARAQYQDKLARQRYEDQLRQQQLQNEENLRRQEDSVQKQEAMRRATVEHEMELRHKNEMLRIEAEARAQAKVERENADIIREQIRLKAAEHRQTVLESIKTAGTVFGEGFRTFISDWDKVTATVAGLTLLAVGVYTAKNATGVAGRYIEARLGKPSLVRDTSRITVAEAVKHPIKITKRLYSKIQDALEGVILSPRLEERVRDIAIATRNTKANKGLYRNILMYGPPGTGKTLFAKKLAMHSGMDYAIMTGGDVAPMGREGVTAMHKVFDWAGTSKRGLLLFVDEADAFLRKRSTEKISEDLRATLNAFLYRTGEQSNKFMLVLASNQPEQFDWAINDRIDEIVHFDLPGLEERERLVRLYFDKYVLQPASEGKQRLKVAQFDYGKKCSELSKLTEGMSGREISKLGVAWQAAAYASEDGILTEAMIDARVADAIRQHQQKMAWLKAEGKEGAKEIGKNPLQPLLEGTQV.

Positions 1 to 64 are disordered; sequence MSWLFGLNKG…AKAARELDQS (64 aa). Over 1–242 the chain is Mitochondrial intermembrane; the sequence is MSWLFGLNKG…FRTFISDWDK (242 aa). A compositionally biased stretch (pro residues) spans 15–27; it reads PGVPGFPEPPSPP. Composition is skewed to basic and acidic residues over residues 33-44 and 53-64; these read GGDKNKPKDKWS and RAAKAARELDQS. Positions 52–215 form a coiled coil; sequence ERAAKAAREL…QIRLKAAEHR (164 aa). A helical membrane pass occupies residues 243–260; it reads VTATVAGLTLLAVGVYTA. Residues 261–593 are Mitochondrial matrix-facing; sequence KNATGVAGRY…LQPLLEGTQV (333 aa). ATP is bound at residue 348 to 355; sequence GPPGTGKT.

This sequence belongs to the AAA ATPase family. Can form homooligomers. Homodimer formation at the N-terminus may be regulated by ATP and is required for the interaction with the inner surface of the mitochondrial outer membrane and correct mitochondrial homeostasis.

The protein resides in the mitochondrion inner membrane. The protein localises to the mitochondrion matrix. It localises to the mitochondrion nucleoid. It carries out the reaction ATP + H2O = ADP + phosphate + H(+). Its function is as follows. Essential for mitochondrial network organization, mitochondrial metabolism and cell growth at organism and cellular level. May play an important role in mitochondrial protein synthesis. May also participate in mitochondrial DNA replication. May bind to mitochondrial DNA D-loops and contribute to nucleoid stability. Required for enhanced channeling of cholesterol for hormone-dependent steroidogenesis. Involved in mitochondrial-mediated antiviral innate immunity. Required to protect mitochondria from the PERK-mediated unfolded protein response: specifically inhibits the activity of EIF2AK3/PERK at mitochondria-endoplasmic reticulum contact sites, thereby providing a safe haven for mitochondrial protein translation during endoplasmic reticulum stress. Ability to inhibit EIF2AK3/PERK is independent of its ATPase activity. Also involved in the mitochondrial DNA damage response by promoting signaling between damaged genomes and the mitochondrial membrane, leading to activation of the integrated stress response (ISR). The chain is ATPase family AAA domain-containing protein 3-A (atad3-a) from Xenopus laevis (African clawed frog).